The following is a 1373-amino-acid chain: Poly(A) RNA polymerase gld-2 homolog B (1373 aa).

A compositionally biased stretch (low complexity) spans 75 to 91 (NSCHSSNSSSNTSNNNN). Disordered stretches follow at residues 75–155 (NSCH…QEKQ), 175–340 (SDCK…FWKT), 425–543 (PDST…QQQK), 734–770 (PQQQ…FADG), 802–866 (CGSG…ALGS), and 880–928 (HPLH…PTPV). The segment covering 96–112 (GQQQQPLHYCNSNNSHS) has biased composition (polar residues). Low complexity-rich tracts occupy residues 130–152 (QQQQ…QMQQ), 180–219 (SDSN…SCSN), 228–251 (NENS…NTSS), and 274–284 (ESGSSEGAAES). Polar residues-rich tracts occupy residues 295-340 (CNSN…FWKT) and 430-442 (KSSS…NMIR). Over residues 443-485 (SSSNGNSNFSRHQYGHQSTGSGYQQQQQRYRNAQNVYQQYQHQ) the composition is skewed to low complexity. The segment covering 486–502 (QQHHAQQHTHPHFRRKH) has biased composition (basic residues). Composition is skewed to low complexity over residues 735-753 (QQQQ…GTSS) and 819-844 (AGAL…SGTS). Polar residues predominate over residues 855 to 866 (PSISPTPSALGS). Residues 880–890 (HPLHQQHPPSH) are compositionally biased toward low complexity. The segment at 945–1373 (RYLAQARNIE…FAETTAAHVA (429 aa)) is sufficent for interaction with Dcr-2. Positions 1029 and 1031 each coordinate Mg(2+). The PAP-associated domain occupies 1211–1272 (TLGEHLLGFF…NIEEPFDLSN (62 aa)). Residues 1320–1341 (LQQHQQQFEQQLHHPISGQQRS) are compositionally biased toward low complexity. The interval 1320–1359 (LQQHQQQFEQQLHHPISGQQRSAGGGGDGANPVPSTLNPD) is disordered.

The protein belongs to the DNA polymerase type-B-like family. GLD2 subfamily. Interacts with orb, an RNA-binding protein, generating an ovarian cytoplasmic polyadenylation complex. Interacts (via C-terminus) with Dcr-2. Mg(2+) serves as cofactor. The cofactor is Mn(2+). As to expression, expressed in ovaries. Not expressed in adult males.

The protein resides in the cytoplasm. The enzyme catalyses RNA(n) + ATP = RNA(n)-3'-adenine ribonucleotide + diphosphate. Functionally, cytoplasmic poly(A) RNA polymerase that adds successive AMP monomers to the 3'-end of specific maternal RNAs (bcd, Tl, and tor), forming a poly(A) tail, during late oogenesis and early embryogenesis. In contrast to the canonical nuclear poly(A) RNA polymerase, it only adds poly(A) to selected cytoplasmic mRNAs. Required for localization of mRNAs to both poles of the egg, to recruit or maintain known centrosomal proteins with two types of microtubule organizing centers (MTOCs): the central MTOC that forms between the meiosis II tandem spindles and the centrosomes of the mitotic spindle. Required at the final stage of oogenesis for meiosis I metaphase arrest and for progression beyond this stage. Functions with the RNA-binding protein Dcr-2 to promote cytoplasmic polyadenylation and translational activation of certain mRNAs such as Tl and r2d2. As a consequence, is involved in regulating Toll immune signaling and promoting resistance to fungal infection. This chain is Poly(A) RNA polymerase gld-2 homolog B (wisp), found in Drosophila melanogaster (Fruit fly).